The primary structure comprises 168 residues: Transmembrane protein 31 (168 aa).

Positions 1-11 (MRLTEKSEGEQ) are enriched in basic and acidic residues. The tract at residues 1-63 (MRLTEKSEGE…LPSRRTPTTS (63 aa)) is disordered. Composition is skewed to polar residues over residues 13 to 22 (LKPNNSNAPN) and 35 to 48 (HTPA…ADTQ). The span at 49–63 (PSRCRLPSRRTPTTS) shows a compositional bias: low complexity. 2 helical membrane passes run 119-139 (IGLP…YKFF) and 148-168 (FFIL…LIFF).

Its subcellular location is the membrane. The protein is Transmembrane protein 31 (TMEM31) of Homo sapiens (Human).